A 164-amino-acid chain; its full sequence is FMN reductase (NADH) RutF (164 aa).

Belongs to the non-flavoprotein flavin reductase family. RutF subfamily.

It carries out the reaction FMNH2 + NAD(+) = FMN + NADH + 2 H(+). Catalyzes the reduction of FMN to FMNH2 which is used to reduce pyrimidine by RutA via the Rut pathway. This Enterobacter cloacae subsp. cloacae (strain ATCC 13047 / DSM 30054 / NBRC 13535 / NCTC 10005 / WDCM 00083 / NCDC 279-56) protein is FMN reductase (NADH) RutF.